Consider the following 492-residue polypeptide: Steroid 21-hydroxylase (492 aa).

Heme b is bound by residues Arg-91 and Lys-120. Arg-231 is a 17alpha-hydroxyprogesterone binding site. Progesterone is bound at residue Arg-231. The heme b site is built by His-363, Arg-424, and Cys-426.

This sequence belongs to the cytochrome P450 family. The cofactor is heme b.

It localises to the endoplasmic reticulum membrane. It is found in the microsome membrane. The enzyme catalyses 17alpha-hydroxyprogesterone + reduced [NADPH--hemoprotein reductase] + O2 = 11-deoxycortisol + oxidized [NADPH--hemoprotein reductase] + H2O + H(+). It catalyses the reaction progesterone + reduced [NADPH--hemoprotein reductase] + O2 = 21-hydroxyprogesterone + oxidized [NADPH--hemoprotein reductase] + H2O + H(+). Functionally, specifically catalyzes the 21-hydroxylation of steroids. Required for the adrenal synthesis of mineralocorticoids and glucocorticoids. In Canis lupus familiaris (Dog), this protein is Steroid 21-hydroxylase (CYP21).